The sequence spans 138 residues: Holo-[acyl-carrier-protein] synthase (138 aa).

Mg(2+) is bound by residues D8 and E60.

Belongs to the P-Pant transferase superfamily. AcpS family. It depends on Mg(2+) as a cofactor.

It localises to the cytoplasm. It catalyses the reaction apo-[ACP] + CoA = holo-[ACP] + adenosine 3',5'-bisphosphate + H(+). Its function is as follows. Transfers the 4'-phosphopantetheine moiety from coenzyme A to a Ser of acyl-carrier-protein. The chain is Holo-[acyl-carrier-protein] synthase from Magnetococcus marinus (strain ATCC BAA-1437 / JCM 17883 / MC-1).